A 277-amino-acid chain; its full sequence is General transcription factor IIF subunit 2 (277 aa).

It belongs to the TFIIF beta subunit family. As to quaternary structure, heterodimer of an alpha and a beta subunit.

The protein resides in the nucleus. Functionally, TFIIF is a general transcription initiation factor that binds to RNA polymerase II and helps to recruit it to the initiation complex in collaboration with TFIIB. This is General transcription factor IIF subunit 2 (TfIIFbeta) from Drosophila melanogaster (Fruit fly).